Consider the following 314-residue polypeptide: Replication initiation protein (314 aa).

This sequence belongs to the plasmid replication initiation factor family.

Its function is as follows. This protein is probably a specific topoisomerase involved in initiating replication. This protein is specifically required and may be rate-limiting for replication of the plasmid in vivo. The protein is Replication initiation protein (repC) of Staphylococcus aureus.